Here is a 249-residue protein sequence, read N- to C-terminus: Sesquipedalian-1 (249 aa).

Residues 17-113 (PVDNAGFLYK…WVKALSRASF (97 aa)) form the PH domain. Disordered stretches follow at residues 134-159 (GGMALPQPQPQSLPLPPSLPSALAPV) and 194-219 (EATFRPGPEPPPPPPRRRASAPHGPL). Residues 140–152 (QPQPQSLPLPPSL) show a composition bias toward pro residues. The residue at position 213 (S213) is a Phosphoserine. Residues 223–235 (PFARLHECYGQEI) carry the F&amp;H motif.

Belongs to the sesquipedalian family. Forms homodimers and heterodimers with PHETA2. Interacts with OCRL and INPP5B. Interaction with OCRL may be important for endosomal morphology and function.

It is found in the early endosome. It localises to the recycling endosome. Its subcellular location is the golgi apparatus. The protein localises to the trans-Golgi network. The protein resides in the cytoplasmic vesicle. It is found in the clathrin-coated vesicle. Functionally, plays a role in endocytic trafficking. Required for receptor recycling from endosomes, both to the trans-Golgi network and the plasma membrane. The protein is Sesquipedalian-1 of Homo sapiens (Human).